The chain runs to 372 residues: DNA double-strand break repair protein Mre11 (372 aa).

Mn(2+) contacts are provided by D8, H10, D49, and N84. H85 (proton donor) is an active-site residue. Mn(2+) is bound by residues H161, H190, and H192.

This sequence belongs to the MRE11/RAD32 family. In terms of assembly, homodimer. Forms a heterotetramer composed of two Mre11 subunits and two Rad50 subunits. The cofactor is Mn(2+).

Nuclease activity is regulated by Rad50. Functionally, part of the Rad50/Mre11 complex, which is involved in the early steps of DNA double-strand break (DSB) repair. The complex may facilitate opening of the processed DNA ends to aid in the recruitment of HerA and NurA. Mre11 binds to DSB ends and has both double-stranded 3'-5' exonuclease activity and single-stranded endonuclease activity. In Methanococcus maripaludis (strain DSM 14266 / JCM 13030 / NBRC 101832 / S2 / LL), this protein is DNA double-strand break repair protein Mre11.